The primary structure comprises 314 residues: GATA zinc finger domain-containing protein 19 (314 aa).

This Dictyostelium discoideum (Social amoeba) protein is GATA zinc finger domain-containing protein 19 (gtaS).